Reading from the N-terminus, the 112-residue chain is Gastrula zinc finger protein XlCGF16.1 (112 aa).

4 C2H2-type zinc fingers span residues 6–28 (YNCS…QKTH), 34–56 (FVCF…QRIH), 62–84 (FSCT…HKTH), and 90–112 (FLCF…HRTH).

It belongs to the krueppel C2H2-type zinc-finger protein family.

It is found in the nucleus. Its function is as follows. May be involved in transcriptional regulation. This is Gastrula zinc finger protein XlCGF16.1 from Xenopus laevis (African clawed frog).